The sequence spans 321 residues: Cytochrome c biogenesis protein CcsA (321 aa).

6 helical membrane-spanning segments follow: residues 17-37 (IISIVITIQLIDLLVYQIVGI), 43-63 (KGIIATFFCITGLLITRWIYS), 143-163 (MLLSYAALLCGALLSVAFLVI), 225-245 (VISLGFIFSTIGILSGAVWAN), 258-275 (ETWAFITWTIFAIYLHTR), and 287-307 (IVASIGFLIIWICYFGVNLLG).

This sequence belongs to the CcmF/CycK/Ccl1/NrfE/CcsA family. May interact with Ccs1.

Its subcellular location is the plastid. The protein resides in the chloroplast thylakoid membrane. Functionally, required during biogenesis of c-type cytochromes (cytochrome c6 and cytochrome f) at the step of heme attachment. The sequence is that of Cytochrome c biogenesis protein CcsA from Drimys granadensis.